A 376-amino-acid chain; its full sequence is Chaperone protein DnaJ (376 aa).

The 66-residue stretch at 5–70 folds into the J domain; sequence DYYEILGVSK…QKRAAYDQYG (66 aa). Residues 131–209 form a CR-type zinc finger; that stretch reads GVTKEIRIPT…CHGHGRVERS (79 aa). Residues Cys-144, Cys-147, Cys-161, Cys-164, Cys-183, Cys-186, Cys-197, and Cys-200 each coordinate Zn(2+). CXXCXGXG motif repeat units lie at residues 144–151, 161–168, 183–190, and 197–204; these read CDVCHGSG, CPTCHGSG, CPHCQGRG, and CNKCHGHG.

Belongs to the DnaJ family. In terms of assembly, homodimer. Zn(2+) serves as cofactor.

It is found in the cytoplasm. Its function is as follows. Participates actively in the response to hyperosmotic and heat shock by preventing the aggregation of stress-denatured proteins and by disaggregating proteins, also in an autonomous, DnaK-independent fashion. Unfolded proteins bind initially to DnaJ; upon interaction with the DnaJ-bound protein, DnaK hydrolyzes its bound ATP, resulting in the formation of a stable complex. GrpE releases ADP from DnaK; ATP binding to DnaK triggers the release of the substrate protein, thus completing the reaction cycle. Several rounds of ATP-dependent interactions between DnaJ, DnaK and GrpE are required for fully efficient folding. Also involved, together with DnaK and GrpE, in the DNA replication of plasmids through activation of initiation proteins. This Escherichia coli (strain K12 / MC4100 / BW2952) protein is Chaperone protein DnaJ.